The chain runs to 790 residues: Alpha,alpha-trehalose-phosphate synthase [UDP-forming] B (790 aa).

In the N-terminal section; belongs to the glycosyltransferase 20 family. It in the C-terminal section; belongs to the trehalose phosphatase family.

It carries out the reaction D-glucose 6-phosphate + UDP-alpha-D-glucose = alpha,alpha-trehalose 6-phosphate + UDP + H(+). Functionally, synthesizes trehalose 6-phosphate, the precursor for the production of trehalose, the main carbohydrate storage reserve of the dormant spore. Trehalose accumulates in both prestalk and prespore cells and then is rapidly metabolized during terminal differentiation of stalk cells, while being stored in spores, where it serves as the principal energy and carbon source for germination. In Dictyostelium discoideum (Social amoeba), this protein is Alpha,alpha-trehalose-phosphate synthase [UDP-forming] B (tpsB).